Consider the following 182-residue polypeptide: tRNA-splicing endonuclease (182 aa).

Active-site residues include Tyr119, His127, and Lys158.

The protein belongs to the tRNA-intron endonuclease family. Archaeal short subfamily. As to quaternary structure, homotetramer; although the tetramer contains four active sites, only two participate in the cleavage. Therefore, it should be considered as a dimer of dimers.

The enzyme catalyses pretRNA = a 3'-half-tRNA molecule with a 5'-OH end + a 5'-half-tRNA molecule with a 2',3'-cyclic phosphate end + an intron with a 2',3'-cyclic phosphate and a 5'-hydroxyl terminus.. Endonuclease that removes tRNA introns. Cleaves pre-tRNA at the 5'- and 3'-splice sites to release the intron. The products are an intron and two tRNA half-molecules bearing 2',3' cyclic phosphate and 5'-OH termini. Recognizes a pseudosymmetric substrate in which 2 bulged loops of 3 bases are separated by a stem of 4 bp. The sequence is that of tRNA-splicing endonuclease from Saccharolobus islandicus (strain Y.N.15.51 / Yellowstone #2) (Sulfolobus islandicus).